A 223-amino-acid chain; its full sequence is Ribose-5-phosphate isomerase A (223 aa).

Residues 26–29 (TGST), 82–85 (DGAD), and 95–98 (KGGG) each bind substrate. Glutamate 104 functions as the Proton acceptor in the catalytic mechanism. Lysine 122 is a binding site for substrate.

This sequence belongs to the ribose 5-phosphate isomerase family. As to quaternary structure, homodimer.

It catalyses the reaction aldehydo-D-ribose 5-phosphate = D-ribulose 5-phosphate. It functions in the pathway carbohydrate degradation; pentose phosphate pathway; D-ribose 5-phosphate from D-ribulose 5-phosphate (non-oxidative stage): step 1/1. Catalyzes the reversible conversion of ribose-5-phosphate to ribulose 5-phosphate. In Streptococcus agalactiae serotype III (strain NEM316), this protein is Ribose-5-phosphate isomerase A.